Here is a 201-residue protein sequence, read N- to C-terminus: Cell division protein SepF (201 aa).

A compositionally biased stretch (basic and acidic residues) spans 27 to 38; the sequence is VQERTSVQRDSR. The disordered stretch occupies residues 27-99; the sequence is VQERTSVQRD…PRVQNKDSVR (73 aa). Polar residues predominate over residues 43 to 54; it reads QEASQRSHMTNS. Basic and acidic residues predominate over residues 72–81; sequence NRQERQRVQR. Residues 83-92 show a composition bias toward polar residues; sequence NAYQQATPRV.

The protein belongs to the SepF family. In terms of assembly, homodimer. Interacts with FtsZ.

The protein resides in the cytoplasm. In terms of biological role, cell division protein that is part of the divisome complex and is recruited early to the Z-ring. Probably stimulates Z-ring formation, perhaps through the cross-linking of FtsZ protofilaments. Its function overlaps with FtsA. The chain is Cell division protein SepF from Streptococcus agalactiae serotype V (strain ATCC BAA-611 / 2603 V/R).